A 263-amino-acid chain; its full sequence is N-acyl homoserine lactonase AttM (263 aa).

Zn(2+)-binding residues include histidine 103, histidine 105, aspartate 107, histidine 108, histidine 180, aspartate 202, and histidine 247.

The protein belongs to the metallo-beta-lactamase superfamily. It depends on Zn(2+) as a cofactor.

It carries out the reaction an N-acyl-L-homoserine lactone + H2O = an N-acyl-L-homoserine + H(+). The chain is N-acyl homoserine lactonase AttM from Rhizobium johnstonii (strain DSM 114642 / LMG 32736 / 3841) (Rhizobium leguminosarum bv. viciae).